Here is a 954-residue protein sequence, read N- to C-terminus: E3 ubiquitin-protein ligase arkadia (954 aa).

The segment covering 50 to 66 has biased composition (polar residues); that stretch reads LCSDTNKQQRDLNSNGT. 2 disordered regions span residues 50 to 175 and 193 to 276; these read LCSD…VSSL and RKRF…SGGM. 2 stretches are compositionally biased toward low complexity: residues 112–131 and 232–251; these read SSFS…GDSD and SSSS…SSST. Residues 280–284 carry the SUMO interaction motif 1 (SIM) motif; the sequence is VVVIE. The short motif at 305–311 is the SUMO interaction motif 2 (SIM) element; it reads EVEIVTV. Disordered stretches follow at residues 318–346, 364–452, and 485–509; these read RTTL…RNRV, TVDE…MPRL, and HFPH…SFRD. Residues 328–337 show a composition bias toward polar residues; that stretch reads WGQNTQSGRT. Residues 360–364 carry the SUMO interaction motif 3 (SIM) motif; the sequence is VVDLT. Over residues 385–395 the composition is skewed to low complexity; the sequence is VSTVSSNTSTS. The segment covering 485-496 has biased composition (basic residues); the sequence is HFPHHHHHHHQS. A ubiquitin binding region spans residues 867-869; that stretch reads YPH. Zn(2+)-binding residues include Cys-902 and Cys-905. Residues 902-943 form an RING-type; atypical zinc finger; sequence CTICLSILEEGEDVRRLPCMHLFHQVCVDQWLITNKKCPICR. The interval 917–921 is ubiquitin binding; the sequence is RLPCM. The Zn(2+) site is built by His-925 and Cys-928.

Belongs to the Arkadia family. In terms of assembly, monomer.

The protein localises to the nucleus. Its subcellular location is the cytoplasm. The protein resides in the PML body. The catalysed reaction is S-ubiquitinyl-[E2 ubiquitin-conjugating enzyme]-L-cysteine + [acceptor protein]-L-lysine = [E2 ubiquitin-conjugating enzyme]-L-cysteine + N(6)-ubiquitinyl-[acceptor protein]-L-lysine.. It participates in protein modification; protein ubiquitination. Its activity is regulated as follows. Binds free ubiquitin non-covalently via its RING-type zinc finger. Ubiquitin-binding leads to enhance the E3 ubiquitin-protein ligase activity by stabilizing the ubiquitin-conjugating enzyme E2 (donor ubiquitin) in the 'closed' conformation and activating ubiquitin transfer. In terms of biological role, E3 ubiquitin-protein ligase required for mesoderm patterning during embryonic development. Acts as an enhancer of the transcriptional responses of the smad2/smad3 effectors, which are activated downstream of BMP. Acts by mediating ubiquitination and degradation of SMAD inhibitors such as smad7, inducing their proteasomal degradation and thereby enhancing the transcriptional activity of TGF-beta and BMP. Specifically binds polysumoylated chains via SUMO interaction motifs (SIMs) and mediates ubiquitination of sumoylated substrates. The regulation of the BMP-SMAD signaling is however independent of sumoylation and is not dependent of SUMO interaction motifs (SIMs). This is E3 ubiquitin-protein ligase arkadia (rnf111) from Xenopus tropicalis (Western clawed frog).